The chain runs to 74 residues: Exodeoxyribonuclease 7 small subunit (74 aa).

This sequence belongs to the XseB family. As to quaternary structure, heterooligomer composed of large and small subunits.

It localises to the cytoplasm. It carries out the reaction Exonucleolytic cleavage in either 5'- to 3'- or 3'- to 5'-direction to yield nucleoside 5'-phosphates.. Bidirectionally degrades single-stranded DNA into large acid-insoluble oligonucleotides, which are then degraded further into small acid-soluble oligonucleotides. The sequence is that of Exodeoxyribonuclease 7 small subunit from Bdellovibrio bacteriovorus (strain ATCC 15356 / DSM 50701 / NCIMB 9529 / HD100).